Consider the following 489-residue polypeptide: MNYFNTLNFRQKINQIKKCRFMEKKEFNKKNEILKNKKIVIVGCGSQGLNQGLNMRDSGLNISYALRKNSILKKNQSWINATKNNFLVGDYESLIPNADLVINLTPDKQHSNVVKELQKLMKKDACLGYSHGFNIVEKLRNIRKDITVIMVAPKCPGTEVREEYKRGFGVGTLIAVHNENDYSNMGLEVAKAWAFSTGGHRAGVLESSFVAEVKSDLMGEQTILCGMLQTASLVCYEKLITTQNHPGYAGKLIQFGWETITESLKHGGITLMMDRLSNSSKIRAFKLSQEIKEFSQNLFQKHMDDIISGDFSSKMIQDWKNKDQNLLNWRYKTKNTSFEQSPDYDKKILEQEYYDHGILMVAILKAGIELSFETMIQSGIMEESAYYESLHELPLIANTIARKKLYEMNMVISDTAEYGNYLFSESAYPILKEFVKNINNTDLGSALPRNSVNNIELYNVNTMIRNHPIEIIGRKLRSYMKNMKTIIVG.

The 192-residue stretch at 16–207 folds into the KARI N-terminal Rossmann domain; sequence IKKCRFMEKK…GGHRAGVLES (192 aa). NADP(+) contacts are provided by residues 44–47, arginine 67, serine 77, and 107–109; these read CGSQ and DKQ. Histidine 131 is a catalytic residue. Glycine 157 provides a ligand contact to NADP(+). 2 consecutive KARI C-terminal knotted domains span residues 208-343 and 344-483; these read SFVA…QSPD and YDKK…MKNM. The Mg(2+) site is built by aspartate 216, glutamate 220, glutamate 388, and glutamate 392. A substrate-binding site is contributed by serine 413.

Belongs to the ketol-acid reductoisomerase family. Requires Mg(2+) as cofactor.

The catalysed reaction is (2R)-2,3-dihydroxy-3-methylbutanoate + NADP(+) = (2S)-2-acetolactate + NADPH + H(+). The enzyme catalyses (2R,3R)-2,3-dihydroxy-3-methylpentanoate + NADP(+) = (S)-2-ethyl-2-hydroxy-3-oxobutanoate + NADPH + H(+). Its pathway is amino-acid biosynthesis; L-isoleucine biosynthesis; L-isoleucine from 2-oxobutanoate: step 2/4. It participates in amino-acid biosynthesis; L-valine biosynthesis; L-valine from pyruvate: step 2/4. In terms of biological role, involved in the biosynthesis of branched-chain amino acids (BCAA). Catalyzes an alkyl-migration followed by a ketol-acid reduction of (S)-2-acetolactate (S2AL) to yield (R)-2,3-dihydroxy-isovalerate. In the isomerase reaction, S2AL is rearranged via a Mg-dependent methyl migration to produce 3-hydroxy-3-methyl-2-ketobutyrate (HMKB). In the reductase reaction, this 2-ketoacid undergoes a metal-dependent reduction by NADPH to yield (R)-2,3-dihydroxy-isovalerate. The polypeptide is Ketol-acid reductoisomerase (NADP(+)) (Buchnera aphidicola subsp. Diuraphis noxia).